A 90-amino-acid chain; its full sequence is Small ribosomal subunit protein uS17 (90 aa).

The protein belongs to the universal ribosomal protein uS17 family. In terms of assembly, part of the 30S ribosomal subunit.

In terms of biological role, one of the primary rRNA binding proteins, it binds specifically to the 5'-end of 16S ribosomal RNA. The protein is Small ribosomal subunit protein uS17 of Dehalococcoides mccartyi (strain ATCC BAA-2100 / JCM 16839 / KCTC 5957 / BAV1).